We begin with the raw amino-acid sequence, 363 residues long: Protein LEG1 homolog (363 aa).

Positions 1–19 are cleaved as a signal peptide; the sequence is MQCVWTLSLLQLVALWANA. N-linked (GlcNAc...) asparagine glycosylation is found at asparagine 79, asparagine 261, and asparagine 292.

This sequence belongs to the LEG1 family.

The protein resides in the secreted. Functionally, may be involved in early liver development. This Oncorhynchus mykiss (Rainbow trout) protein is Protein LEG1 homolog.